The following is a 621-amino-acid chain: Type 2 DNA topoisomerase 6 subunit B (621 aa).

ATP-binding positions include asparagine 48, aspartate 80, 101-102 (SR), 111-118 (GQQGIGIS), and lysine 435.

It belongs to the TOP6B family. In terms of assembly, homodimer. Heterotetramer of two Top6A and two Top6B chains.

It catalyses the reaction ATP-dependent breakage, passage and rejoining of double-stranded DNA.. Its function is as follows. Relaxes both positive and negative superturns and exhibits a strong decatenase activity. This Methanosarcina barkeri (strain Fusaro / DSM 804) protein is Type 2 DNA topoisomerase 6 subunit B.